Here is a 375-residue protein sequence, read N- to C-terminus: 23S rRNA (uracil(747)-C(5))-methyltransferase RlmC (375 aa).

[4Fe-4S] cluster-binding residues include C3, C11, C14, and C87. 4 residues coordinate S-adenosyl-L-methionine: Q212, F241, E262, and N307. The active-site Nucleophile is C334.

This sequence belongs to the class I-like SAM-binding methyltransferase superfamily. RNA M5U methyltransferase family. RlmC subfamily.

The enzyme catalyses uridine(747) in 23S rRNA + S-adenosyl-L-methionine = 5-methyluridine(747) in 23S rRNA + S-adenosyl-L-homocysteine + H(+). In terms of biological role, catalyzes the formation of 5-methyl-uridine at position 747 (m5U747) in 23S rRNA. The chain is 23S rRNA (uracil(747)-C(5))-methyltransferase RlmC from Escherichia coli O157:H7.